A 492-amino-acid chain; its full sequence is Ketol-acid reductoisomerase (NADP(+)) (492 aa).

Positions 14 to 208 (LDQLGKCRFM…GGHRAGVLQS (195 aa)) constitute a KARI N-terminal Rossmann domain. Residues 45-48 (CGAQ), R68, R76, S78, and 108-110 (DKQ) contribute to the NADP(+) site. H132 is a catalytic residue. G158 contacts NADP(+). KARI C-terminal knotted domains follow at residues 209-344 (SFVA…NAPQ) and 345-485 (FDGK…MKDM). Residues D217, E221, E389, and E393 each coordinate Mg(2+). S414 provides a ligand contact to substrate.

It belongs to the ketol-acid reductoisomerase family. Mg(2+) is required as a cofactor.

It carries out the reaction (2R)-2,3-dihydroxy-3-methylbutanoate + NADP(+) = (2S)-2-acetolactate + NADPH + H(+). The enzyme catalyses (2R,3R)-2,3-dihydroxy-3-methylpentanoate + NADP(+) = (S)-2-ethyl-2-hydroxy-3-oxobutanoate + NADPH + H(+). It functions in the pathway amino-acid biosynthesis; L-isoleucine biosynthesis; L-isoleucine from 2-oxobutanoate: step 2/4. The protein operates within amino-acid biosynthesis; L-valine biosynthesis; L-valine from pyruvate: step 2/4. In terms of biological role, involved in the biosynthesis of branched-chain amino acids (BCAA). Catalyzes an alkyl-migration followed by a ketol-acid reduction of (S)-2-acetolactate (S2AL) to yield (R)-2,3-dihydroxy-isovalerate. In the isomerase reaction, S2AL is rearranged via a Mg-dependent methyl migration to produce 3-hydroxy-3-methyl-2-ketobutyrate (HMKB). In the reductase reaction, this 2-ketoacid undergoes a metal-dependent reduction by NADPH to yield (R)-2,3-dihydroxy-isovalerate. In Pectobacterium atrosepticum (strain SCRI 1043 / ATCC BAA-672) (Erwinia carotovora subsp. atroseptica), this protein is Ketol-acid reductoisomerase (NADP(+)).